A 226-amino-acid chain; its full sequence is Phosphoribosylformylglycinamidine synthase subunit PurQ (226 aa).

The 225-residue stretch at Lys-2 to Asn-226 folds into the Glutamine amidotransferase type-1 domain. The active-site Nucleophile is the Cys-86. Active-site residues include His-195 and Glu-197.

Part of the FGAM synthase complex composed of 1 PurL, 1 PurQ and 2 PurS subunits.

It is found in the cytoplasm. It carries out the reaction N(2)-formyl-N(1)-(5-phospho-beta-D-ribosyl)glycinamide + L-glutamine + ATP + H2O = 2-formamido-N(1)-(5-O-phospho-beta-D-ribosyl)acetamidine + L-glutamate + ADP + phosphate + H(+). It catalyses the reaction L-glutamine + H2O = L-glutamate + NH4(+). The protein operates within purine metabolism; IMP biosynthesis via de novo pathway; 5-amino-1-(5-phospho-D-ribosyl)imidazole from N(2)-formyl-N(1)-(5-phospho-D-ribosyl)glycinamide: step 1/2. Part of the phosphoribosylformylglycinamidine synthase complex involved in the purines biosynthetic pathway. Catalyzes the ATP-dependent conversion of formylglycinamide ribonucleotide (FGAR) and glutamine to yield formylglycinamidine ribonucleotide (FGAM) and glutamate. The FGAM synthase complex is composed of three subunits. PurQ produces an ammonia molecule by converting glutamine to glutamate. PurL transfers the ammonia molecule to FGAR to form FGAM in an ATP-dependent manner. PurS interacts with PurQ and PurL and is thought to assist in the transfer of the ammonia molecule from PurQ to PurL. The polypeptide is Phosphoribosylformylglycinamidine synthase subunit PurQ (Lactococcus lactis subsp. cremoris (Streptococcus cremoris)).